A 335-amino-acid chain; its full sequence is Glyceraldehyde-3-phosphate dehydrogenase (335 aa).

Residues 12-13, aspartate 34, arginine 78, and serine 120 each bind NAD(+); that span reads RI. Residues 151-153 and threonine 182 contribute to the D-glyceraldehyde 3-phosphate site; that span reads SCT. The active-site Nucleophile is the cysteine 152. Asparagine 183 serves as a coordination point for NAD(+). D-glyceraldehyde 3-phosphate is bound by residues arginine 197, 210 to 211, and arginine 233; that span reads TG. Residue asparagine 315 participates in NAD(+) binding.

Belongs to the glyceraldehyde-3-phosphate dehydrogenase family. Homotetramer.

The protein resides in the cytoplasm. The enzyme catalyses D-glyceraldehyde 3-phosphate + phosphate + NAD(+) = (2R)-3-phospho-glyceroyl phosphate + NADH + H(+). It participates in carbohydrate degradation; glycolysis; pyruvate from D-glyceraldehyde 3-phosphate: step 1/5. Functionally, catalyzes the oxidative phosphorylation of glyceraldehyde 3-phosphate (G3P) to 1,3-bisphosphoglycerate (BPG) using the cofactor NAD. The first reaction step involves the formation of a hemiacetal intermediate between G3P and a cysteine residue, and this hemiacetal intermediate is then oxidized to a thioester, with concomitant reduction of NAD to NADH. The reduced NADH is then exchanged with the second NAD, and the thioester is attacked by a nucleophilic inorganic phosphate to produce BPG. The protein is Glyceraldehyde-3-phosphate dehydrogenase (gap) of Geobacillus stearothermophilus (Bacillus stearothermophilus).